A 130-amino-acid polypeptide reads, in one-letter code: Small ribosomal subunit protein uS11 (130 aa).

It belongs to the universal ribosomal protein uS11 family. As to quaternary structure, part of the 30S ribosomal subunit. Interacts with proteins S7 and S18. Binds to IF-3.

Functionally, located on the platform of the 30S subunit, it bridges several disparate RNA helices of the 16S rRNA. Forms part of the Shine-Dalgarno cleft in the 70S ribosome. In Synechococcus sp. (strain CC9605), this protein is Small ribosomal subunit protein uS11.